Here is a 427-residue protein sequence, read N- to C-terminus: Peptidase B (427 aa).

Positions 195 and 200 each coordinate Mn(2+). The active site involves Lys207. Asp218, Asp277, and Glu279 together coordinate Mn(2+). Residue Arg281 is part of the active site.

Belongs to the peptidase M17 family. In terms of assembly, homohexamer. Mn(2+) serves as cofactor.

The protein localises to the cytoplasm. The catalysed reaction is Release of an N-terminal amino acid, Xaa, from a peptide or arylamide. Xaa is preferably Glu or Asp but may be other amino acids, including Leu, Met, His, Cys and Gln.. In terms of biological role, probably plays an important role in intracellular peptide degradation. This Escherichia coli O7:K1 (strain IAI39 / ExPEC) protein is Peptidase B.